The sequence spans 591 residues: Serine/threonine-protein kinase Nek2 (591 aa).

The Protein kinase domain occupies 4–258; sequence YEVLEQIGKG…AAQLLKHPQL (255 aa). ATP contacts are provided by residues 10-18 and Lys33; that span reads IGKGAFGSA. The active-site Proton acceptor is Asp129. 3 disordered regions span residues 309–331, 387–408, and 500–534; these read LGNERTVTFSKPSPERNSVSSTR, EPPKTSYNRTYRSELPSKTTPN, and RTDGDNGSDSSGRNATAASSRGSNDSRQQRFDTSS. 2 stretches are compositionally biased toward polar residues: residues 391 to 408 and 504 to 534; these read TSYNRTYRSELPSKTTPN and DNGSDSSGRNATAASSRGSNDSRQQRFDTSS.

It belongs to the protein kinase superfamily. NEK Ser/Thr protein kinase family. NIMA subfamily.

The enzyme catalyses L-seryl-[protein] + ATP = O-phospho-L-seryl-[protein] + ADP + H(+). It catalyses the reaction L-threonyl-[protein] + ATP = O-phospho-L-threonyl-[protein] + ADP + H(+). Functionally, may be involved in plant development processes. In Oryza sativa subsp. indica (Rice), this protein is Serine/threonine-protein kinase Nek2 (NEK2).